A 326-amino-acid chain; its full sequence is NAD-dependent protein deacylase SIR5 (326 aa).

The transit peptide at methionine 1–phenylalanine 26 directs the protein to the mitochondrion. The 297-residue stretch at alanine 28–glutamate 324 folds into the Deacetylase sirtuin-type domain. Glycine 53–tryptophan 72 provides a ligand contact to NAD(+). Positions 97 and 100 each coordinate substrate. The active-site Proton acceptor is histidine 151. Zn(2+) contacts are provided by cysteine 159, cysteine 162, cysteine 211, and cysteine 214.

It belongs to the sirtuin family. Class I subfamily. In terms of assembly, interacts with LAT1; the interaction is direct. The cofactor is Zn(2+).

Its subcellular location is the mitochondrion. The protein localises to the cytoplasm. The protein resides in the cytosol. It is found in the nucleus. It localises to the chromosome. The enzyme catalyses N(6)-acetyl-L-lysyl-[protein] + NAD(+) + H2O = 2''-O-acetyl-ADP-D-ribose + nicotinamide + L-lysyl-[protein]. It carries out the reaction N(6)-(2E)-butenoyl-L-lysyl-[protein] + H2O = (2E)-2-butenoate + L-lysyl-[protein]. Functionally, NAD-dependent protein-lysine deacylase that decrotonylates the PDC (pyruvate dehydrogenase complex) subunit LAT1 at 'Lys-148' to inhibit PDC activity and consequently ATP production. Also decrotonylates histone H3 crotonylated at 'Lys-18' (H3K18cr), to repress the expression of genes involved in aerobic respiration. May also act as a NAD-dependent deacetylase. Does not mediate desuccinylation, demalonylation, or deglutarylation of LAT1. In Fusarium oxysporum f. sp. lycopersici (strain 4287 / CBS 123668 / FGSC 9935 / NRRL 34936) (Fusarium vascular wilt of tomato), this protein is NAD-dependent protein deacylase SIR5.